A 425-amino-acid polypeptide reads, in one-letter code: 3-phosphoshikimate 1-carboxyvinyltransferase (425 aa).

The 3-phosphoshikimate site is built by lysine 21, serine 22, and arginine 26. A phosphoenolpyruvate-binding site is contributed by lysine 21. Residues glycine 91 and arginine 119 each coordinate phosphoenolpyruvate. 3-phosphoshikimate contacts are provided by serine 164, glutamine 166, aspartate 311, and lysine 338. Glutamine 166 is a phosphoenolpyruvate binding site. Aspartate 311 (proton acceptor) is an active-site residue. The phosphoenolpyruvate site is built by arginine 342 and arginine 383.

It belongs to the EPSP synthase family. In terms of assembly, monomer.

It localises to the cytoplasm. The catalysed reaction is 3-phosphoshikimate + phosphoenolpyruvate = 5-O-(1-carboxyvinyl)-3-phosphoshikimate + phosphate. It functions in the pathway metabolic intermediate biosynthesis; chorismate biosynthesis; chorismate from D-erythrose 4-phosphate and phosphoenolpyruvate: step 6/7. Functionally, catalyzes the transfer of the enolpyruvyl moiety of phosphoenolpyruvate (PEP) to the 5-hydroxyl of shikimate-3-phosphate (S3P) to produce enolpyruvyl shikimate-3-phosphate and inorganic phosphate. The chain is 3-phosphoshikimate 1-carboxyvinyltransferase from Campylobacter fetus subsp. fetus (strain 82-40).